The primary structure comprises 602 residues: ATP-dependent DNA helicase XPD (602 aa).

Residues 1 to 247 (MQKSYGVALE…DLIEMIRSAL (247 aa)) form the Helicase ATP-binding domain. An ATP-binding site is contributed by 11 to 18 (SPTGSGKT). The [4Fe-4S] cluster site is built by Cys-74, Cys-95, Cys-110, and Cys-146. The DEAH box signature appears at 193–196 (DEAH). Residues 421-602 (VIEDIILKVK…SAQAREKYGA (182 aa)) enclose the Helicase C-terminal domain. SsDNA contacts are provided by Trp-531 and Arg-566.

Belongs to the helicase family. RAD3/XPD subfamily. As to quaternary structure, monomer. [4Fe-4S] cluster is required as a cofactor.

The catalysed reaction is Couples ATP hydrolysis with the unwinding of duplex DNA at the replication fork by translocating in the 5'-3' direction. This creates two antiparallel DNA single strands (ssDNA). The leading ssDNA polymer is the template for DNA polymerase III holoenzyme which synthesizes a continuous strand.. It catalyses the reaction ATP + H2O = ADP + phosphate + H(+). Its function is as follows. ATP-dependent 5'-3' DNA helicase. Thought to be involved in nucleotide excision repair (NER) of DNA. The protein is ATP-dependent DNA helicase XPD of Thermoplasma acidophilum (strain ATCC 25905 / DSM 1728 / JCM 9062 / NBRC 15155 / AMRC-C165).